A 60-amino-acid polypeptide reads, in one-letter code: UPF0434 protein NMC0623 (60 aa).

This sequence belongs to the UPF0434 family.

The protein is UPF0434 protein NMC0623 of Neisseria meningitidis serogroup C / serotype 2a (strain ATCC 700532 / DSM 15464 / FAM18).